The following is a 475-amino-acid chain: Glutamate--tRNA ligase 2 (475 aa).

Residues 11 to 21 carry the 'HIGH' region motif; it reads PSPTGFLHIGG. The span at 116–133 shows a compositional bias: basic and acidic residues; it reads AEGRPPRYDGTWRDKDPA. The interval 116–137 is disordered; the sequence is AEGRPPRYDGTWRDKDPAEAPS. Positions 240–244 match the 'KMSKS' region motif; the sequence is KLSKR. Position 243 (lysine 243) interacts with ATP.

It belongs to the class-I aminoacyl-tRNA synthetase family. Glutamate--tRNA ligase type 1 subfamily. Monomer.

Its subcellular location is the cytoplasm. It catalyses the reaction tRNA(Glu) + L-glutamate + ATP = L-glutamyl-tRNA(Glu) + AMP + diphosphate. In terms of biological role, catalyzes the attachment of glutamate to tRNA(Glu) in a two-step reaction: glutamate is first activated by ATP to form Glu-AMP and then transferred to the acceptor end of tRNA(Glu). The polypeptide is Glutamate--tRNA ligase 2 (Chelativorans sp. (strain BNC1)).